The chain runs to 450 residues: Phosphoglucosamine mutase (450 aa).

Catalysis depends on S101, which acts as the Phosphoserine intermediate. S101, D240, D242, and D244 together coordinate Mg(2+). S101 is modified (phosphoserine).

It belongs to the phosphohexose mutase family. Mg(2+) is required as a cofactor. Post-translationally, activated by phosphorylation.

The catalysed reaction is alpha-D-glucosamine 1-phosphate = D-glucosamine 6-phosphate. Catalyzes the conversion of glucosamine-6-phosphate to glucosamine-1-phosphate. In Streptococcus pneumoniae serotype 4 (strain ATCC BAA-334 / TIGR4), this protein is Phosphoglucosamine mutase.